The chain runs to 303 residues: Bidirectional sugar transporter SWEET14 (303 aa).

Topologically, residues 1-9 (MAGMSLQHP) are extracellular. The helical transmembrane segment at 10–30 (WAFAFGLLGNIISFMTYLAPL) threads the bilayer. Residues 13–98 (AFGLLGNIIS…AVYLVYAPKK (86 aa)) enclose the MtN3/slv 1 domain. The Cytoplasmic portion of the chain corresponds to 31–44 (PTFYRIYKSKSTQG). Residues 45 to 65 (FQSVPYVVALFSAMLWIYYAL) form a helical membrane-spanning segment. At 66–72 (LKSDECL) the chain is on the extracellular side. A helical membrane pass occupies residues 73–93 (LITINSAGCVIETIYIAVYLV). At 94–105 (YAPKKAKMFTAK) the chain is on the cytoplasmic side. A helical membrane pass occupies residues 106 to 126 (LLLLVNVGVFGLILLLTLLLS). The Extracellular portion of the chain corresponds to 127-133 (AGDRRIV). Residues 134–154 (VLGWVCVGFSVSVFVAPLSII) form a helical membrane-spanning segment. The 84-residue stretch at 134 to 217 (VLGWVCVGFS…MGLYAMYRNS (84 aa)) folds into the MtN3/slv 2 domain. Topologically, residues 155–167 (RLVVRTKSVEFMP) are cytoplasmic. Residues 168–188 (FSLSFSLTISAVVWFLYGLLI) traverse the membrane as a helical segment. Residues 189-192 (KDKY) are Extracellular-facing. Residues 193–213 (VALPNVLGFSFGVIQMGLYAM) traverse the membrane as a helical segment. Over 214–303 (YRNSTPKAVL…AGAGEKKVAA (90 aa)) the chain is Cytoplasmic. A disordered region spans residues 266–290 (HPVDVESPPAEAPPQEDDKAAAATA).

The protein belongs to the SWEET sugar transporter family. In terms of assembly, forms homooligomers and/or heterooligomers.

The protein localises to the cell membrane. Its function is as follows. Mediates both low-affinity uptake and efflux of sugar across the plasma membrane. The polypeptide is Bidirectional sugar transporter SWEET14 (SWEET14) (Oryza sativa subsp. indica (Rice)).